The chain runs to 282 residues: Phosphatidylserine decarboxylase proenzyme (282 aa).

Residues aspartate 89, histidine 145, and serine 249 each act as charge relay system; for autoendoproteolytic cleavage activity in the active site. Serine 249 functions as the Schiff-base intermediate with substrate; via pyruvic acid; for decarboxylase activity in the catalytic mechanism. Serine 249 is modified (pyruvic acid (Ser); by autocatalysis).

It belongs to the phosphatidylserine decarboxylase family. PSD-B subfamily. Prokaryotic type I sub-subfamily. In terms of assembly, heterodimer of a large membrane-associated beta subunit and a small pyruvoyl-containing alpha subunit. Pyruvate serves as cofactor. In terms of processing, is synthesized initially as an inactive proenzyme. Formation of the active enzyme involves a self-maturation process in which the active site pyruvoyl group is generated from an internal serine residue via an autocatalytic post-translational modification. Two non-identical subunits are generated from the proenzyme in this reaction, and the pyruvate is formed at the N-terminus of the alpha chain, which is derived from the carboxyl end of the proenzyme. The autoendoproteolytic cleavage occurs by a canonical serine protease mechanism, in which the side chain hydroxyl group of the serine supplies its oxygen atom to form the C-terminus of the beta chain, while the remainder of the serine residue undergoes an oxidative deamination to produce ammonia and the pyruvoyl prosthetic group on the alpha chain. During this reaction, the Ser that is part of the protease active site of the proenzyme becomes the pyruvoyl prosthetic group, which constitutes an essential element of the active site of the mature decarboxylase.

It localises to the cell membrane. The enzyme catalyses a 1,2-diacyl-sn-glycero-3-phospho-L-serine + H(+) = a 1,2-diacyl-sn-glycero-3-phosphoethanolamine + CO2. It functions in the pathway phospholipid metabolism; phosphatidylethanolamine biosynthesis; phosphatidylethanolamine from CDP-diacylglycerol: step 2/2. Catalyzes the formation of phosphatidylethanolamine (PtdEtn) from phosphatidylserine (PtdSer). This Anaeromyxobacter sp. (strain K) protein is Phosphatidylserine decarboxylase proenzyme.